We begin with the raw amino-acid sequence, 646 residues long: Beta-galactosidase-1-like protein (646 aa).

Residues 1 to 23 (MPPDLPSLLLRLVVLLLLSQAEA) form the signal peptide. N-linked (GlcNAc...) asparagine glycosylation is present at asparagine 93. Residue glutamate 182 is the Proton donor of the active site. N-linked (GlcNAc...) asparagine glycosylation is present at asparagine 239. The Nucleophile role is filled by glutamate 260.

It belongs to the glycosyl hydrolase 35 family.

The protein localises to the secreted. Probable glycosyl hydrolase. This chain is Beta-galactosidase-1-like protein (Glb1l), found in Mus musculus (Mouse).